Here is a 406-residue protein sequence, read N- to C-terminus: 5-cytosine rRNA methyltransferase NSUN4 (406 aa).

Residues Gly207, Gly208, Lys209, Asp226, Arg231, Asp259, Gly260, and Asp277 each contribute to the S-adenosyl-L-methionine site. Residue Cys332 is the Nucleophile of the active site.

It belongs to the class I-like SAM-binding methyltransferase superfamily. RsmB/NOP family.

Its subcellular location is the mitochondrion. The enzyme catalyses a cytidine in rRNA + S-adenosyl-L-methionine = a 5-methylcytidine in rRNA + S-adenosyl-L-homocysteine + H(+). It carries out the reaction a cytidine in mRNA + S-adenosyl-L-methionine = a 5-methylcytidine in mRNA + S-adenosyl-L-homocysteine + H(+). Involved in mitochondrial ribosome large subunit biogenesis. Functionally, mitochondrial RNA cytosine C(5)-methyltransferase that methylates cytosine to 5-methylcytosine (m5C) in various RNAs, such as rRNAs, mRNAs and some long non-coding RNAs (lncRNAs). Involved in mitochondrial ribosome small subunit (SSU) maturation by catalyzing methylation of mitochondrial 12S rRNA. This chain is 5-cytosine rRNA methyltransferase NSUN4 (nsun4), found in Xenopus tropicalis (Western clawed frog).